The sequence spans 251 residues: tRNA (guanine-N(1)-)-methyltransferase (251 aa).

Residues glycine 114 and 134-139 contribute to the S-adenosyl-L-methionine site; that span reads IGDYVL.

This sequence belongs to the RNA methyltransferase TrmD family. In terms of assembly, homodimer.

The protein resides in the cytoplasm. The catalysed reaction is guanosine(37) in tRNA + S-adenosyl-L-methionine = N(1)-methylguanosine(37) in tRNA + S-adenosyl-L-homocysteine + H(+). In terms of biological role, specifically methylates guanosine-37 in various tRNAs. This Pelotomaculum thermopropionicum (strain DSM 13744 / JCM 10971 / SI) protein is tRNA (guanine-N(1)-)-methyltransferase.